The sequence spans 475 residues: UDP-N-acetylmuramate--L-alanine ligase (475 aa).

Residue 125-131 (GTHGKTT) coordinates ATP.

This sequence belongs to the MurCDEF family.

The protein resides in the cytoplasm. It catalyses the reaction UDP-N-acetyl-alpha-D-muramate + L-alanine + ATP = UDP-N-acetyl-alpha-D-muramoyl-L-alanine + ADP + phosphate + H(+). It functions in the pathway cell wall biogenesis; peptidoglycan biosynthesis. Its function is as follows. Cell wall formation. The protein is UDP-N-acetylmuramate--L-alanine ligase of Haemophilus influenzae (strain PittGG).